A 383-amino-acid chain; its full sequence is 1-deoxy-D-xylulose 5-phosphate reductoisomerase (383 aa).

Positions 10, 11, 12, 13, 38, and 121 each coordinate NADPH. 1-deoxy-D-xylulose 5-phosphate is bound at residue K122. E123 is an NADPH binding site. D147 provides a ligand contact to Mn(2+). 4 residues coordinate 1-deoxy-D-xylulose 5-phosphate: S148, E149, S172, and H195. Residue E149 coordinates Mn(2+). Residue G201 coordinates NADPH. 1-deoxy-D-xylulose 5-phosphate-binding residues include S208, N213, K214, and E217. E217 is a Mn(2+) binding site.

Belongs to the DXR family. It depends on Mg(2+) as a cofactor. Mn(2+) serves as cofactor.

The enzyme catalyses 2-C-methyl-D-erythritol 4-phosphate + NADP(+) = 1-deoxy-D-xylulose 5-phosphate + NADPH + H(+). The protein operates within isoprenoid biosynthesis; isopentenyl diphosphate biosynthesis via DXP pathway; isopentenyl diphosphate from 1-deoxy-D-xylulose 5-phosphate: step 1/6. Functionally, catalyzes the NADPH-dependent rearrangement and reduction of 1-deoxy-D-xylulose-5-phosphate (DXP) to 2-C-methyl-D-erythritol 4-phosphate (MEP). The chain is 1-deoxy-D-xylulose 5-phosphate reductoisomerase from Ruthia magnifica subsp. Calyptogena magnifica.